The sequence spans 206 residues: Synaptosomal-associated protein 25 (206 aa).

A compositionally biased stretch (basic and acidic residues) spans 1–20; the sequence is MAEDADMRNELEEMQRRADQ. A disordered region spans residues 1 to 23; the sequence is MAEDADMRNELEEMQRRADQLAD. Residues 19 to 81 enclose the t-SNARE coiled-coil homology 1 domain; it reads DQLADESLES…KEAEKNLTDL (63 aa). S-palmitoyl cysteine attachment occurs at residues C85, C88, C90, and C92. T138 is subject to Phosphothreonine. The 63-residue stretch at 140–202 folds into the t-SNARE coiled-coil homology 2 domain; sequence DARENEMDEN…DEANQRATKM (63 aa). S187 is subject to Phosphoserine.

This sequence belongs to the SNAP-25 family. As to quaternary structure, part of the SNARE core complex containing SNAP25, VAMP2 and STX1A. This complex binds CPLX1. Interacts with TRIM9, RIMS1 and SNAPIN. Binds STXBP6. Found in a ternary complex with STX1A and VAMP8. Associates with the BLOC-1 complex. Isoform 1 and isoform 2 interact with BLOC1S6. Interacts with alpha-synuclein/SNCA. Post-translationally, palmitoylated. Cys-85 appears to be the main site, and palmitoylation is required for membrane association.

It localises to the membrane. It is found in the synapse. Its subcellular location is the synaptosome. The protein localises to the cell membrane. Functionally, t-SNARE involved in the molecular regulation of neurotransmitter release. May play an important role in the synaptic function of specific neuronal systems. Associates with proteins involved in vesicle docking and membrane fusion. This Gallus gallus (Chicken) protein is Synaptosomal-associated protein 25 (SNAP25).